A 203-amino-acid chain; its full sequence is Holliday junction branch migration complex subunit RuvA (203 aa).

The tract at residues 1-64 is domain I; it reads MIGRLRGIII…EDAQLLYGFN (64 aa). Positions 65 to 142 are domain II; the sequence is NKQERTLFKE…KGLHGDLFTP (78 aa). The segment at 143-154 is flexible linker; it reads AADLVLTSPASP. The tract at residues 155 to 203 is domain III; the sequence is ATDDAEQEAVAALVALGYKPQEASRMVSKIARPDTSSETLIREALRAAL.

Belongs to the RuvA family. In terms of assembly, homotetramer. Forms an RuvA(8)-RuvB(12)-Holliday junction (HJ) complex. HJ DNA is sandwiched between 2 RuvA tetramers; dsDNA enters through RuvA and exits via RuvB. An RuvB hexamer assembles on each DNA strand where it exits the tetramer. Each RuvB hexamer is contacted by two RuvA subunits (via domain III) on 2 adjacent RuvB subunits; this complex drives branch migration. In the full resolvosome a probable DNA-RuvA(4)-RuvB(12)-RuvC(2) complex forms which resolves the HJ.

It localises to the cytoplasm. Its function is as follows. The RuvA-RuvB-RuvC complex processes Holliday junction (HJ) DNA during genetic recombination and DNA repair, while the RuvA-RuvB complex plays an important role in the rescue of blocked DNA replication forks via replication fork reversal (RFR). RuvA specifically binds to HJ cruciform DNA, conferring on it an open structure. The RuvB hexamer acts as an ATP-dependent pump, pulling dsDNA into and through the RuvAB complex. HJ branch migration allows RuvC to scan DNA until it finds its consensus sequence, where it cleaves and resolves the cruciform DNA. In Shigella flexneri serotype 5b (strain 8401), this protein is Holliday junction branch migration complex subunit RuvA.